The chain runs to 679 residues: DNA ligase (679 aa).

Residues 43–47, 92–93, and Glu124 each bind NAD(+); these read DYVYD and SM. The active-site N6-AMP-lysine intermediate is the Lys126. Residues Arg147, Glu181, Lys297, and Lys321 each contribute to the NAD(+) site. The Zn(2+) site is built by Cys415, Cys418, Cys433, and Cys438. Residues 599–679 form the BRCT domain; that stretch reads TESAEWAGKR…RFDQAMKEEN (81 aa).

It belongs to the NAD-dependent DNA ligase family. LigA subfamily. It depends on Mg(2+) as a cofactor. Requires Mn(2+) as cofactor.

It catalyses the reaction NAD(+) + (deoxyribonucleotide)n-3'-hydroxyl + 5'-phospho-(deoxyribonucleotide)m = (deoxyribonucleotide)n+m + AMP + beta-nicotinamide D-nucleotide.. Its function is as follows. DNA ligase that catalyzes the formation of phosphodiester linkages between 5'-phosphoryl and 3'-hydroxyl groups in double-stranded DNA using NAD as a coenzyme and as the energy source for the reaction. It is essential for DNA replication and repair of damaged DNA. The chain is DNA ligase from Limosilactobacillus fermentum (strain NBRC 3956 / LMG 18251) (Lactobacillus fermentum).